The primary structure comprises 416 residues: LL-diaminopimelate aminotransferase (416 aa).

Substrate contacts are provided by Tyr-15 and Gly-42. Pyridoxal 5'-phosphate-binding positions include Tyr-72, 108–109 (SK), Tyr-132, Asn-187, Tyr-218, and 246–248 (SFS). Substrate contacts are provided by Lys-109, Tyr-132, and Asn-187. N6-(pyridoxal phosphate)lysine is present on Lys-249. Arg-257 and Asn-292 together coordinate pyridoxal 5'-phosphate. Substrate contacts are provided by Asn-292 and Arg-388.

Belongs to the class-I pyridoxal-phosphate-dependent aminotransferase family. LL-diaminopimelate aminotransferase subfamily. Homodimer. The cofactor is pyridoxal 5'-phosphate.

The enzyme catalyses (2S,6S)-2,6-diaminopimelate + 2-oxoglutarate = (S)-2,3,4,5-tetrahydrodipicolinate + L-glutamate + H2O + H(+). The protein operates within amino-acid biosynthesis; L-lysine biosynthesis via DAP pathway; LL-2,6-diaminopimelate from (S)-tetrahydrodipicolinate (aminotransferase route): step 1/1. Functionally, involved in the synthesis of meso-diaminopimelate (m-DAP or DL-DAP), required for both lysine and peptidoglycan biosynthesis. Catalyzes the direct conversion of tetrahydrodipicolinate to LL-diaminopimelate. This chain is LL-diaminopimelate aminotransferase, found in Synechococcus sp. (strain JA-2-3B'a(2-13)) (Cyanobacteria bacterium Yellowstone B-Prime).